Here is a 235-residue protein sequence, read N- to C-terminus: Small ribosomal subunit protein uS3 (235 aa).

One can recognise a KH type-2 domain in the interval isoleucine 39–arginine 107. The interval alanine 213–arginine 235 is disordered.

The protein belongs to the universal ribosomal protein uS3 family. In terms of assembly, part of the 30S ribosomal subunit. Forms a tight complex with proteins S10 and S14.

In terms of biological role, binds the lower part of the 30S subunit head. Binds mRNA in the 70S ribosome, positioning it for translation. The polypeptide is Small ribosomal subunit protein uS3 (Roseobacter denitrificans (strain ATCC 33942 / OCh 114) (Erythrobacter sp. (strain OCh 114))).